A 1334-amino-acid chain; its full sequence is MEPAPELLFYVNGRKVVEKQVDPETMLLPYLRKKLRLTGTKYGCGGGGCGACTVMISRYNRVTKKIRHYPVNACLTPICSLYGAAVTTVEGIGSTTTRLHPVQERIAKFHGTQCGFCTPGMVMSMYALLRNHPEPTLDQLADALGGNLCRCTGYRPIIEAYKTFCKTSDCCQNKENGFCCLDQGINGLPEVEEENQTRPNLFSEEEYLPLDPTQELIFPPELMTMAEKQPQRTRVFSGERMMWISPVTLKALLEAKSTYPQAPVVMGNTSVGPGVKFKGIFHPVIISPDSIEELNVVSHTHSGLTLGAGLSLAQVKDILADVVQKVPEENAQTYRALLKHLGTLAGSQIRNMASLGGHIISRHLDSDLNPLLAVGNCTLNVLSKEGERQIPLDEQFLSRCPEADLKPQEILASVHIPYSRKWEFVLAFRQAQRKQNALAIVNSGMRVFFGEGDGIIRELAISYGGVGPTIICAKNSCQKLIGRSWNEEMLDTACRLILDEVSLPGSAPGGKVEFKRTLIISFLFKFYLEVSQILKRMAPGLSPHLADKYESALQDLHARYSWSTLKDQDVDARQLSQDPIGHPVMHLSGVKHATGEAIYLDDMPAVDQELFMAFVTSPRAHAKIVSTDLLEALSLPGVVDIVTAEHLQDGNTFYTEKLLAADEVLCVGQLVCAVIAESEVQAKQAAKQVKIVYEDLEPVILSIEEAIEQKSFFEPERKLEYGNVDEAFKVVDQILEGEIHMGGQEHFYMETQSVLVVPKGEDQEMDVYASTQFPKYIQDMVAAVLKLPVNKVMCHVKRVGGAFGGKVFKASIMAAIAAFAANKHGRAVRCILERGEDMLITGGRHPYLGKYKAGFMNDGRIVALDVEHYSNGGCSLDESLLVIEMGLLKMENAYKFPNLRCRGWACRTNLPSNTAFRGFGFPQAGLITECCITEVAAKCGLSPEKVRAINFYKEIDQTPYKQEINAKNLTQCWNECLAKSSYFQRKVAVEKFNAENYWKQRGLAIIPFKYPRGLGSVAYGQAAALVHVYLDGSVLVTHGGIEMGQGVHTKMIQVVSRELKMPMSNVHLRGTSTETVPNTNASGGSVVADLNGLAVKDACQTLLKRLEPIINKNPQGTWKEWAQAAFDKSISLSATGYFRGYDSNIDWDKGEGHPFEYFVYGAACSEVEIDCLTGDHKTIRTDIVMDVGYSINPALDIGQVEGAFIQGMGLYTIEELHYSPQGILYSRGPNQYKIPAICDIPAELNVTFLPPSEKSNTLYSSKGLGESGVFMGCSVFFAIREAVCAARQARGLSAPWKLSSPLTPEKIRMACEDKFTKMIPRDKPGSYVPWNVPV.

One can recognise a 2Fe-2S ferredoxin-type domain in the interval 5 to 92 (PELLFYVNGR…GAAVTTVEGI (88 aa)). Residues C44, C49, C52, and C74 each coordinate [2Fe-2S] cluster. Q113 is a Mo-molybdopterin binding site. [2Fe-2S] cluster is bound by residues C114, C117, C149, and C151. C151 serves as a coordination point for Mo-molybdopterin. The region spanning 236 to 421 (FSGERMMWIS…ASVHIPYSRK (186 aa)) is the FAD-binding PCMH-type domain. Residues 264 to 271 (VVMGNTSV), A345, S354, H358, D367, and L411 contribute to the FAD site. Mo-molybdopterin-binding positions include 802–803 (AF) and M1043. Position 1064 is a phosphoserine (S1064). Residues 1084–1087 (GSVV), Q1199, and L1264 each bind Mo-molybdopterin. E1266 functions as the Proton acceptor; for azaheterocycle hydroxylase activity in the catalytic mechanism.

Belongs to the xanthine dehydrogenase family. In terms of assembly, homodimer. Requires [2Fe-2S] cluster as cofactor. The cofactor is FAD. It depends on Mo-molybdopterin as a cofactor. In terms of processing, the N-terminus is blocked. In terms of tissue distribution, very high expression in liver and lung. High expression in kidney, pancreas, brain stem and spinal cord. Moderate expression in heart, testis, eye, cerebral cortex and cerebellum. Low expression in stomach and muscle.

The protein localises to the cytoplasm. The enzyme catalyses an aldehyde + O2 + H2O = a carboxylate + H2O2 + H(+). The catalysed reaction is retinal + O2 + H2O = retinoate + H2O2 + H(+). It catalyses the reaction all-trans-retinal + O2 + H2O = all-trans-retinoate + H2O2 + H(+). Its activity is regulated as follows. Inhibited by hydralazine and menadione. Not inhibited by BOF-4272 or allopurinol, xanthine dehydrogenase potent inhibitors. In contrast to guinea pig, human and rat, isovanillin is not an inhibitor but a substrate for AOX1 in rabbit. Its function is as follows. Oxidase with broad substrate specificity, oxidizing aromatic azaheterocycles, such as N1-methylnicotinamide, N-methylphthalazinium and phthalazine, as well as aldehydes, such as benzaldehyde, retinal, pyridoxal, and vanillin. Plays a key role in the metabolism of xenobiotics and drugs containing aromatic azaheterocyclic substituents. Participates in the bioactivation of prodrugs such as famciclovir, catalyzing the oxidation step from 6-deoxypenciclovir to penciclovir, which is a potent antiviral agent. Is probably involved in the regulation of reactive oxygen species homeostasis. May be a prominent source of superoxide generation via the one-electron reduction of molecular oxygen. May also catalyze nitric oxide (NO) production via the reduction of nitrite to NO with NADH or aldehyde as electron donor. May play a role in adipogenesis. Cannot use hypoxanthine and all-trans-retinol as substrate. The sequence is that of Aldehyde oxidase 1 from Oryctolagus cuniculus (Rabbit).